The primary structure comprises 401 residues: Multidrug resistance protein MdtH (401 aa).

The next 11 membrane-spanning stretches (helical) occupy residues 13–33 (YFLL…FPLI), 34–54 (SIRF…ALGL), 99–116 (PWIL…GTLF), 139–159 (LLMM…SWLL), 165–185 (FVCW…VWLL), 214–234 (VLTL…LPIV), 243–263 (AAVK…LYPI), 277–297 (LMFG…ITHL), 299–319 (TLFM…PARE), 340–360 (LGLA…YDTG), and 368–388 (LPWF…YWQF).

This sequence belongs to the major facilitator superfamily. DHA1 family. MdtH (TC 2.A.1.2.21) subfamily.

Its subcellular location is the cell inner membrane. The chain is Multidrug resistance protein MdtH from Yersinia enterocolitica serotype O:8 / biotype 1B (strain NCTC 13174 / 8081).